Here is an 833-residue protein sequence, read N- to C-terminus: Leucine--tRNA ligase (833 aa).

Residues Pro41–His52 carry the 'HIGH' region motif. Residues Lys610–Ser614 carry the 'KMSKS' region motif. Lys613 contributes to the ATP binding site.

The protein belongs to the class-I aminoacyl-tRNA synthetase family.

Its subcellular location is the cytoplasm. It catalyses the reaction tRNA(Leu) + L-leucine + ATP = L-leucyl-tRNA(Leu) + AMP + diphosphate. The protein is Leucine--tRNA ligase of Streptococcus pyogenes serotype M1.